We begin with the raw amino-acid sequence, 241 residues long: ATP synthase subunit a (241 aa).

Helical transmembrane passes span 29–49 (NSSL…LFGI), 54–74 (VIPG…ISII), 86–106 (IPLI…GVLP), 114–134 (HVIV…IVGF), 153–173 (WLAP…PVSL), 177–197 (LAAN…FIVN), 200–220 (IFFT…EVFV), and 221–241 (AILQ…DAVK).

The protein belongs to the ATPase A chain family. F-type ATPases have 2 components, CF(1) - the catalytic core - and CF(0) - the membrane proton channel. CF(1) has five subunits: alpha(3), beta(3), gamma(1), delta(1), epsilon(1). CF(0) has three main subunits: a(1), b(2) and c(9-12). The alpha and beta chains form an alternating ring which encloses part of the gamma chain. CF(1) is attached to CF(0) by a central stalk formed by the gamma and epsilon chains, while a peripheral stalk is formed by the delta and b chains.

It is found in the cell inner membrane. Key component of the proton channel; it plays a direct role in the translocation of protons across the membrane. In Wolbachia sp. subsp. Drosophila simulans (strain wRi), this protein is ATP synthase subunit a.